A 192-amino-acid chain; its full sequence is MNILRLDASMRKTGSYSRILTDKLIEQLTSGKNNEVTIRDLADGIPLIDENWIKANFTDVDERTCEQKVCLVASDILVDELYKAEHIVIGLPIYNFGVPAAFKAWIDQVVRSKLTFRYGDNGPVGLVENKKAYIIIASGGTKLGTEIDFISDYLRHILGFIGITDVTFIDSSGLGRDESQTLAHAHKAIERV.

FMN contacts are provided by residues serine 9 and 15–17 (SYS).

The protein belongs to the azoreductase type 1 family. As to quaternary structure, homodimer. FMN is required as a cofactor.

It carries out the reaction 2 a quinone + NADH + H(+) = 2 a 1,4-benzosemiquinone + NAD(+). The enzyme catalyses N,N-dimethyl-1,4-phenylenediamine + anthranilate + 2 NAD(+) = 2-(4-dimethylaminophenyl)diazenylbenzoate + 2 NADH + 2 H(+). Quinone reductase that provides resistance to thiol-specific stress caused by electrophilic quinones. In terms of biological role, also exhibits azoreductase activity. Catalyzes the reductive cleavage of the azo bond in aromatic azo compounds to the corresponding amines. This is FMN-dependent NADH:quinone oxidoreductase 1 from Colwellia psychrerythraea (strain 34H / ATCC BAA-681) (Vibrio psychroerythus).